The following is a 312-amino-acid chain: NADH-ubiquinone oxidoreductase chain 1 (312 aa).

The next 8 membrane-spanning stretches (helical) occupy residues 3-23 (FMEL…LTVA), 37-57 (PNAV…KLLL), 69-89 (FMLI…WAMI), 104-124 (FMLA…AGWA), 141-161 (LISY…LTGT), 173-193 (SMWL…GCVA), 233-253 (MLFY…GLIL), and 279-299 (LIAM…LFMP).

The protein belongs to the complex I subunit 1 family.

It is found in the mitochondrion inner membrane. It carries out the reaction a ubiquinone + NADH + 5 H(+)(in) = a ubiquinol + NAD(+) + 4 H(+)(out). Functionally, core subunit of the mitochondrial membrane respiratory chain NADH dehydrogenase (Complex I) that is believed to belong to the minimal assembly required for catalysis. Complex I functions in the transfer of electrons from NADH to the respiratory chain. The immediate electron acceptor for the enzyme is believed to be ubiquinone. This Debaryomyces hansenii (strain ATCC 36239 / CBS 767 / BCRC 21394 / JCM 1990 / NBRC 0083 / IGC 2968) (Yeast) protein is NADH-ubiquinone oxidoreductase chain 1 (ND1).